The primary structure comprises 737 residues: ARMADILLO BTB ARABIDOPSIS PROTEIN 1 (737 aa).

ARM repeat units lie at residues 112 to 154, 165 to 212, 215 to 254, 257 to 296, 299 to 338, 341 to 380, 382 to 421, 456 to 495, and 497 to 536; these read DENV…KDCA, PGYQ…NIAH, PRIK…TVSF, DENK…NLVH, PDIK…QFAA, SDCK…RLAQ, AHNQ…GLAD, LKRL…HLCD, and KDGK…ELAK. In terms of domain architecture, BTB spans 568 to 635; that stretch reads SDVTFLIDGK…IYSGRINIAK (68 aa).

Forms a heterodimeric complex with TCP24. Interacts with the origin recognition complex (preRC) components ORC1A, ORC1B, CDT1A and CDT1B. Interacts with DUF7/AIP1. Weakly expressed in the emerging lateral roots and mainly expressed in the shoot apex, young leaves and flower buds.

Its subcellular location is the nucleus. It functions in the pathway protein modification; protein ubiquitination. Its function is as follows. May act as a substrate-specific adapter of an E3 ubiquitin-protein ligase complex (CUL3-RBX1-BTB) which mediates the ubiquitination and subsequent proteasomal degradation of target proteins. In association with TCP24, exerts a negative role in cell proliferation in leaves, possibly by inhibiting mitotic DNA replication. The protein is ARMADILLO BTB ARABIDOPSIS PROTEIN 1 (ABAP1) of Arabidopsis thaliana (Mouse-ear cress).